The following is a 133-amino-acid chain: Ribosome-binding factor A (133 aa).

It belongs to the RbfA family. As to quaternary structure, monomer. Binds 30S ribosomal subunits, but not 50S ribosomal subunits or 70S ribosomes.

It is found in the cytoplasm. One of several proteins that assist in the late maturation steps of the functional core of the 30S ribosomal subunit. Associates with free 30S ribosomal subunits (but not with 30S subunits that are part of 70S ribosomes or polysomes). Required for efficient processing of 16S rRNA. May interact with the 5'-terminal helix region of 16S rRNA. The protein is Ribosome-binding factor A of Salmonella schwarzengrund (strain CVM19633).